A 964-amino-acid polypeptide reads, in one-letter code: Protein translocase subunit SecA (964 aa).

Residues glutamine 86, 104–108 (GEGKT), and aspartate 494 each bind ATP. A disordered region spans residues 846 to 964 (ETAESADTIA…YKMCHGQNEA (119 aa)). Residues 871-882 (AEGEVEEEDEDT) are compositionally biased toward acidic residues. The segment covering 887–900 (AIAESAAASEAGES) has biased composition (low complexity). 4 residues coordinate Zn(2+): cysteine 947, cysteine 949, cysteine 958, and histidine 959.

The protein belongs to the SecA family. In terms of assembly, monomer and homodimer. Part of the essential Sec protein translocation apparatus which comprises SecA, SecYEG and auxiliary proteins SecDF. Other proteins may also be involved. Requires Zn(2+) as cofactor.

The protein localises to the cell membrane. It localises to the cytoplasm. The enzyme catalyses ATP + H2O + cellular proteinSide 1 = ADP + phosphate + cellular proteinSide 2.. In terms of biological role, part of the Sec protein translocase complex. Interacts with the SecYEG preprotein conducting channel. Has a central role in coupling the hydrolysis of ATP to the transfer of proteins into and across the cell membrane, serving as an ATP-driven molecular motor driving the stepwise translocation of polypeptide chains across the membrane. The chain is Protein translocase subunit SecA from Bifidobacterium longum subsp. infantis (strain ATCC 15697 / DSM 20088 / JCM 1222 / NCTC 11817 / S12).